Here is a 96-residue protein sequence, read N- to C-terminus: Small ribosomal subunit protein bS18 (96 aa).

This sequence belongs to the bacterial ribosomal protein bS18 family. As to quaternary structure, part of the 30S ribosomal subunit. Forms a tight heterodimer with protein bS6.

Binds as a heterodimer with protein bS6 to the central domain of the 16S rRNA, where it helps stabilize the platform of the 30S subunit. This chain is Small ribosomal subunit protein bS18, found in Borrelia garinii subsp. bavariensis (strain ATCC BAA-2496 / DSM 23469 / PBi) (Borreliella bavariensis).